The following is a 335-amino-acid chain: Syntaxin-18 (335 aa).

The Cytoplasmic segment spans residues 1 to 309 (MAVDITLLFR…EDIREAIKNN (309 aa)). Residues 168 to 208 (KLEPEPNTKTRESTSSEKVSRSPSKDSEENPATEERPEKIL) show a composition bias toward basic and acidic residues. Residues 168–226 (KLEPEPNTKTRESTSSEKVSRSPSKDSEENPATEERPEKILAETQPELGTWGDGKGEDE) are disordered. The region spanning 243 to 305 (IGEMNSLFDE…KEGNEDIREA (63 aa)) is the t-SNARE coiled-coil homology domain. A helical; Anchor for type IV membrane protein membrane pass occupies residues 310-330 (AGFRVWILFFLVMCSFSLLFL). Residues 331–335 (DWYDS) lie on the Vesicular side of the membrane.

It belongs to the syntaxin family. In terms of assembly, component of a SNARE complex consisting of STX18, USE1L, BNIP1/SEC20L, and SEC22B. RINT1/TIP20L and ZW10 are associated with the complex through interaction with BNIP1/SEC20L. Interacts directly with USE1L and BNIP1/SEC20L.

It is found in the endoplasmic reticulum membrane. The protein localises to the golgi apparatus membrane. In terms of biological role, syntaxin that may be involved in targeting and fusion of Golgi-derived retrograde transport vesicles with the ER. This is Syntaxin-18 (STX18) from Pongo abelii (Sumatran orangutan).